A 41-amino-acid polypeptide reads, in one-letter code: Photosystem I reaction center subunit IX (41 aa).

The chain crosses the membrane as a helical span at residues Tyr7 to Ile27.

This sequence belongs to the PsaJ family.

The protein resides in the cellular thylakoid membrane. Its function is as follows. May help in the organization of the PsaE and PsaF subunits. This chain is Photosystem I reaction center subunit IX, found in Cyanothece sp. (strain PCC 7425 / ATCC 29141).